Reading from the N-terminus, the 156-residue chain is Ribosome maturation factor RimP (156 aa).

It belongs to the RimP family.

Its subcellular location is the cytoplasm. Functionally, required for maturation of 30S ribosomal subunits. In Bacillus thuringiensis (strain Al Hakam), this protein is Ribosome maturation factor RimP.